Consider the following 338-residue polypeptide: Nicotinate-nucleotide--dimethylbenzimidazole phosphoribosyltransferase (338 aa).

Residue Glu-305 is the Proton acceptor of the active site.

This sequence belongs to the CobT family. Homodimer.

The enzyme catalyses 5,6-dimethylbenzimidazole + nicotinate beta-D-ribonucleotide = alpha-ribazole 5'-phosphate + nicotinate + H(+). It participates in nucleoside biosynthesis; alpha-ribazole biosynthesis; alpha-ribazole from 5,6-dimethylbenzimidazole: step 1/2. In terms of biological role, catalyzes the synthesis of alpha-ribazole-5'-phosphate from nicotinate mononucleotide (NAMN) and 5,6-dimethylbenzimidazole (DMB). This is Nicotinate-nucleotide--dimethylbenzimidazole phosphoribosyltransferase (cobU) from Sinorhizobium sp.